We begin with the raw amino-acid sequence, 473 residues long: Glutamate--tRNA ligase 1 (473 aa).

The 'HIGH' region signature appears at 23 to 33 (PSPTGLLHVGG). A 'KMSKS' region motif is present at residues 252–256 (KLSKR). Lys255 contributes to the ATP binding site.

This sequence belongs to the class-I aminoacyl-tRNA synthetase family. Glutamate--tRNA ligase type 1 subfamily. In terms of assembly, monomer.

It localises to the cytoplasm. The catalysed reaction is tRNA(Glu) + L-glutamate + ATP = L-glutamyl-tRNA(Glu) + AMP + diphosphate. Its function is as follows. Catalyzes the attachment of glutamate to tRNA(Glu) in a two-step reaction: glutamate is first activated by ATP to form Glu-AMP and then transferred to the acceptor end of tRNA(Glu). The protein is Glutamate--tRNA ligase 1 of Granulibacter bethesdensis (strain ATCC BAA-1260 / CGDNIH1).